We begin with the raw amino-acid sequence, 224 residues long: CRIB domain-containing protein RIC1 (224 aa).

A CRIB domain is found at 29-42 (IGFPTDVKHVAHIG). Residues 38–224 (VAHIGSDGPT…SVDTTCNDII (187 aa)) form a disordered region. 4 stretches are compositionally biased toward polar residues: residues 69–84 (SRGNSNKYNPQGTNQR), 114–132 (PNHNGSPPRKSSGNAASSD), 144–155 (AHGSTDSSNDQE), and 215–224 (SVDTTCNDII).

As to quaternary structure, interacts with ARAC11/ROP1. In terms of tissue distribution, expressed in columella cells from the root tip and epidermal cells at the base of lateral roots, leaves, stems, flowers, anthers, pollen and siliques.

The protein localises to the cytoplasm. It localises to the cytoskeleton. In terms of biological role, functions as a downstream effector of Rho-related GTP binding proteins of the 'Rho of Plants' (ROPs) family. Participates in the propagation of ROP GTPase signals in specific cellular responses. Required for cortical microtubule organization. Promotes microtubule bundling and formation of well-ordered microtubule arrays in the neck region of pavement cells. This restricts cell lateral expansion to generate the narrow neck morphology of pavement cells. Its function is inhibited when it interacts with activated ARAC4/ROP2. Represses ARAC4/ROP2 activation and antagonizes the RIC4-actin pathway that promotes the assembly of cortical actin microfilaments. Acts as a downstream effector of ARAC3/ROP6 which functions in a signaling pathway that negatively regulates clathrin-mediated endocytosis and internalization of PIN1 and PIN2. Required for the asymmetric auxin distribution during root gravitropism and vascular patterning. Positively regulates auxin responses, but negatively regulates ABA responses during lateral root development and primary root elongation. The polypeptide is CRIB domain-containing protein RIC1 (RIC1) (Arabidopsis thaliana (Mouse-ear cress)).